Consider the following 448-residue polypeptide: Trigger factor (448 aa).

One can recognise a PPIase FKBP-type domain in the interval 172 to 257; sequence GDRVTVDFVG…MKKIEWPHLP (86 aa).

Belongs to the FKBP-type PPIase family. Tig subfamily.

Its subcellular location is the cytoplasm. The enzyme catalyses [protein]-peptidylproline (omega=180) = [protein]-peptidylproline (omega=0). Its function is as follows. Involved in protein export. Acts as a chaperone by maintaining the newly synthesized protein in an open conformation. Functions as a peptidyl-prolyl cis-trans isomerase. In Burkholderia cenocepacia (strain HI2424), this protein is Trigger factor.